The chain runs to 297 residues: tRNA pseudouridine synthase B (297 aa).

Catalysis depends on Asp-39, which acts as the Nucleophile.

The protein belongs to the pseudouridine synthase TruB family. Type 1 subfamily.

It catalyses the reaction uridine(55) in tRNA = pseudouridine(55) in tRNA. Functionally, responsible for synthesis of pseudouridine from uracil-55 in the psi GC loop of transfer RNAs. The sequence is that of tRNA pseudouridine synthase B from Lactobacillus gasseri (strain ATCC 33323 / DSM 20243 / BCRC 14619 / CIP 102991 / JCM 1131 / KCTC 3163 / NCIMB 11718 / NCTC 13722 / AM63).